The chain runs to 269 residues: Shikimate dehydrogenase (NADP(+)) (269 aa).

Residues 15–17 (SLS) and threonine 62 contribute to the shikimate site. Catalysis depends on lysine 66, which acts as the Proton acceptor. Asparagine 86 and aspartate 99 together coordinate shikimate. Residues 123-127 (GAGGA), 146-151 (NRTTAK), and leucine 213 contribute to the NADP(+) site. Tyrosine 215 is a binding site for shikimate. Residue glycine 236 participates in NADP(+) binding.

This sequence belongs to the shikimate dehydrogenase family. As to quaternary structure, homodimer.

It carries out the reaction shikimate + NADP(+) = 3-dehydroshikimate + NADPH + H(+). It functions in the pathway metabolic intermediate biosynthesis; chorismate biosynthesis; chorismate from D-erythrose 4-phosphate and phosphoenolpyruvate: step 4/7. Functionally, involved in the biosynthesis of the chorismate, which leads to the biosynthesis of aromatic amino acids. Catalyzes the reversible NADPH linked reduction of 3-dehydroshikimate (DHSA) to yield shikimate (SA). This Methanocella arvoryzae (strain DSM 22066 / NBRC 105507 / MRE50) protein is Shikimate dehydrogenase (NADP(+)).